The primary structure comprises 343 residues: Mas-related G-protein coupled receptor member F (343 aa).

Topologically, residues 1 to 44 (MAGNCSWEAHSTNQNKMCPGMSEARELYSRGFLTIEQIATLPPP) are extracellular. Asn4 is a glycosylation site (N-linked (GlcNAc...) asparagine). Residues 45 to 66 (AVTNYIFLLLCLCGLVGNGLVL) form a helical membrane-spanning segment. At 67–82 (WFFGFSIKRTPFSIYF) the chain is on the cytoplasmic side. A helical membrane pass occupies residues 83–104 (LHLASADGMYLFSKAVIALLNM). The Extracellular segment spans residues 105 to 123 (GTFLGSFPDYIRRVSRIVG). A helical membrane pass occupies residues 124-144 (LCTFFTGVSLLPAISIERCVS). Residues 145-160 (VIFPTWYWRRRPKRLS) are Cytoplasmic-facing. A helical membrane pass occupies residues 161-181 (AGVCALLWMLSFLVTSIHNYF). Over 182 to 198 (CMFLGHEAPGTVCRNMD) the chain is Extracellular. A helical membrane pass occupies residues 199–220 (IALGILLFFLFCPLMVLPCLAL). Residues 221–241 (ILHVECRARRRQRSAKLNHVV) are Cytoplasmic-facing. The helical transmembrane segment at 242–263 (LAIVSVFLVSSIYLGIDWFLFW) threads the bilayer. Over 264–273 (VFQIPAPFPE) the chain is Extracellular. Residues 274–294 (YVTDLCICINSSAKPIVYFLA) traverse the membrane as a helical segment. At 295–343 (GRDKSQRLWEPLRVVFQRALRDGAEPGDAASSTPNTVTMEMQCPSGNAS) the chain is on the cytoplasmic side. Residues 318–343 (AEPGDAASSTPNTVTMEMQCPSGNAS) are disordered. Polar residues predominate over residues 324-343 (ASSTPNTVTMEMQCPSGNAS).

The protein belongs to the G-protein coupled receptor 1 family. Mas subfamily.

It localises to the cell membrane. Orphan receptor. May bind to a neuropeptide and may regulate nociceptor function and/or development, including the sensation or modulation of pain. The protein is Mas-related G-protein coupled receptor member F (Mrgprf) of Mus musculus (Mouse).